The following is a 239-amino-acid chain: Transcriptional regulatory protein RstA (239 aa).

The region spanning threonine 3 to leucine 116 is the Response regulatory domain. Aspartate 52 is subject to 4-aspartylphosphate. A DNA-binding region (ompR/PhoB-type) is located at residues tyrosine 136 to proline 235.

Phosphorylated by RstB.

It localises to the cytoplasm. Functionally, member of the two-component regulatory system RstB/RstA. This chain is Transcriptional regulatory protein RstA (rstA), found in Escherichia coli (strain K12).